Reading from the N-terminus, the 87-residue chain is Sec-independent protein translocase protein TatA (87 aa).

A helical transmembrane segment spans residues 1 to 21 (MGSFSIWHWLIVLLIVVMVFG). The tract at residues 40 to 87 (KDGMKDGSTPEGTPASTTAATPPAGQVTNQQAHAADPGTIDVEAKHKG) is disordered. A compositionally biased stretch (low complexity) spans 46–64 (GSTPEGTPASTTAATPPAG).

It belongs to the TatA/E family. In terms of assembly, the Tat system comprises two distinct complexes: a TatABC complex, containing multiple copies of TatA, TatB and TatC subunits, and a separate TatA complex, containing only TatA subunits. Substrates initially bind to the TatABC complex, which probably triggers association of the separate TatA complex to form the active translocon.

It is found in the cell inner membrane. Functionally, part of the twin-arginine translocation (Tat) system that transports large folded proteins containing a characteristic twin-arginine motif in their signal peptide across membranes. TatA could form the protein-conducting channel of the Tat system. The sequence is that of Sec-independent protein translocase protein TatA from Paracidovorax citrulli (strain AAC00-1) (Acidovorax citrulli).